The chain runs to 117 residues: ATP-dependent Clp protease adapter protein ClpS 1 (117 aa).

It belongs to the ClpS family. In terms of assembly, binds to the N-terminal domain of the chaperone ClpA.

Its function is as follows. Involved in the modulation of the specificity of the ClpAP-mediated ATP-dependent protein degradation. This is ATP-dependent Clp protease adapter protein ClpS 1 from Agrobacterium fabrum (strain C58 / ATCC 33970) (Agrobacterium tumefaciens (strain C58)).